The chain runs to 389 residues: Phosphopentomutase (389 aa).

Mn(2+)-binding residues include aspartate 9, aspartate 282, histidine 287, aspartate 323, histidine 324, and histidine 335.

Belongs to the phosphopentomutase family. The cofactor is Mn(2+).

The protein resides in the cytoplasm. It catalyses the reaction 2-deoxy-alpha-D-ribose 1-phosphate = 2-deoxy-D-ribose 5-phosphate. The catalysed reaction is alpha-D-ribose 1-phosphate = D-ribose 5-phosphate. It functions in the pathway carbohydrate degradation; 2-deoxy-D-ribose 1-phosphate degradation; D-glyceraldehyde 3-phosphate and acetaldehyde from 2-deoxy-alpha-D-ribose 1-phosphate: step 1/2. Isomerase that catalyzes the conversion of deoxy-ribose 1-phosphate (dRib-1-P) and ribose 1-phosphate (Rib-1-P) to deoxy-ribose 5-phosphate (dRib-5-P) and ribose 5-phosphate (Rib-5-P), respectively. In Pseudothermotoga lettingae (strain ATCC BAA-301 / DSM 14385 / NBRC 107922 / TMO) (Thermotoga lettingae), this protein is Phosphopentomutase.